The chain runs to 97 residues: Large ribosomal subunit protein bL28 (97 aa).

The protein belongs to the bacterial ribosomal protein bL28 family.

The protein is Large ribosomal subunit protein bL28 of Brucella abortus (strain S19).